We begin with the raw amino-acid sequence, 295 residues long: UDP-N-acetylenolpyruvoylglucosamine reductase (295 aa).

Positions 24-188 (KVGGDAEIFF…LKAVFKVNKG (165 aa)) constitute an FAD-binding PCMH-type domain. Arginine 168 is a catalytic residue. Serine 217 (proton donor) is an active-site residue. Glutamate 287 is an active-site residue.

This sequence belongs to the MurB family. FAD serves as cofactor.

It is found in the cytoplasm. The enzyme catalyses UDP-N-acetyl-alpha-D-muramate + NADP(+) = UDP-N-acetyl-3-O-(1-carboxyvinyl)-alpha-D-glucosamine + NADPH + H(+). The protein operates within cell wall biogenesis; peptidoglycan biosynthesis. Its function is as follows. Cell wall formation. The sequence is that of UDP-N-acetylenolpyruvoylglucosamine reductase from Rickettsia akari (strain Hartford).